We begin with the raw amino-acid sequence, 133 residues long: Histone H2A.1 (133 aa).

A disordered region spans residues 1-23; the sequence is MSTTGKGGKAKGKTASSKQVSRS. Ser2 bears the N-acetylserine mark. An N6-acetyllysine mark is found at Lys6, Lys9, Lys11, Lys13, and Lys18. Ser123 carries the phosphoserine modification. A Glycyl lysine isopeptide (Lys-Gly) (interchain with G-Cter in ubiquitin) cross-link involves residue Lys124. Position 129 is a phosphoserine (Ser129).

The protein belongs to the histone H2A family. As to quaternary structure, the nucleosome is a histone octamer containing two molecules each of H2A, H2B, H3 and H4 assembled in one H3-H4 heterotetramer and two H2A-H2B heterodimers. The octamer wraps approximately 147 bp of DNA. Monoubiquitination of Lys-124 gives a specific tag for epigenetic transcriptional repression. In terms of processing, acetylation occurs almost exclusively in the MAC.

The protein localises to the nucleus. The protein resides in the chromosome. In terms of biological role, core component of nucleosome. Nucleosomes wrap and compact DNA into chromatin, limiting DNA accessibility to the cellular machineries which require DNA as a template. Histones thereby play a central role in transcription regulation, DNA repair, DNA replication and chromosomal stability. DNA accessibility is regulated via a complex set of post-translational modifications of histones, also called histone code, and nucleosome remodeling. In Tetrahymena pyriformis, this protein is Histone H2A.1 (HTA2).